The following is a 735-amino-acid chain: Catalase-peroxidase (735 aa).

The segment at residues 95 to 223 (WHSAGTYRTG…LAAVQMGLIY (129 aa)) is a cross-link (tryptophyl-tyrosyl-methioninium (Trp-Tyr) (with M-249)). H96 serves as the catalytic Proton acceptor. Positions 223 to 249 (YVNPEGPDGVPDPIKSGIDIRETFARM) form a cross-link, tryptophyl-tyrosyl-methioninium (Tyr-Met) (with W-95). H264 lines the heme b pocket.

This sequence belongs to the peroxidase family. Peroxidase/catalase subfamily. Homodimer or homotetramer. Requires heme b as cofactor. Post-translationally, formation of the three residue Trp-Tyr-Met cross-link is important for the catalase, but not the peroxidase activity of the enzyme.

It catalyses the reaction H2O2 + AH2 = A + 2 H2O. The catalysed reaction is 2 H2O2 = O2 + 2 H2O. Functionally, bifunctional enzyme with both catalase and broad-spectrum peroxidase activity. The chain is Catalase-peroxidase from Aliarcobacter butzleri (strain RM4018) (Arcobacter butzleri).